Consider the following 350-residue polypeptide: Twinfilin-1 (350 aa).

2 consecutive ADF-H domains span residues 4–139 (QTGI…KYLA) and 177–313 (GIAF…EEVH). The segment at 316–350 (QHAHKQNFAKPKGPAGKRGIRRLIRGPAEAETAND) is disordered.

This sequence belongs to the actin-binding proteins ADF family. Twinfilin subfamily. In terms of assembly, interacts with G-actin; ADP-actin form.

The protein localises to the cytoplasm. It is found in the cytoskeleton. In terms of biological role, actin-binding protein involved in motile and morphological processes. Inhibits actin polymerization, likely by sequestering G-actin. The sequence is that of Twinfilin-1 (twf1) from Xenopus tropicalis (Western clawed frog).